Here is a 77-residue protein sequence, read N- to C-terminus: NADH-ubiquinone oxidoreductase chain 4L (77 aa).

Transmembrane regions (helical) follow at residues 18–38 (LMFI…LFSG) and 44–64 (MFFY…VVMV).

It belongs to the complex I subunit 4L family.

Its subcellular location is the mitochondrion membrane. The catalysed reaction is a ubiquinone + NADH + 5 H(+)(in) = a ubiquinol + NAD(+) + 4 H(+)(out). Its function is as follows. Core subunit of the mitochondrial membrane respiratory chain NADH dehydrogenase (Complex I) that is believed to belong to the minimal assembly required for catalysis. Complex I functions in the transfer of electrons from NADH to the respiratory chain. The immediate electron acceptor for the enzyme is believed to be ubiquinone. This is NADH-ubiquinone oxidoreductase chain 4L (ND4L) from Ascaris suum (Pig roundworm).